The following is a 129-amino-acid chain: Small ribosomal subunit protein uS8 (129 aa).

It belongs to the universal ribosomal protein uS8 family. As to quaternary structure, part of the 30S ribosomal subunit. Contacts proteins S5 and S12.

Its function is as follows. One of the primary rRNA binding proteins, it binds directly to 16S rRNA central domain where it helps coordinate assembly of the platform of the 30S subunit. The protein is Small ribosomal subunit protein uS8 of Mycoplasma capricolum subsp. capricolum (strain California kid / ATCC 27343 / NCTC 10154).